The chain runs to 226 residues: NAD(P)H-quinone oxidoreductase subunit K, chloroplastic (226 aa).

4 residues coordinate [4Fe-4S] cluster: C43, C44, C108, and C139.

This sequence belongs to the complex I 20 kDa subunit family. NDH is composed of at least 16 different subunits, 5 of which are encoded in the nucleus. [4Fe-4S] cluster serves as cofactor.

It is found in the plastid. It localises to the chloroplast thylakoid membrane. The enzyme catalyses a plastoquinone + NADH + (n+1) H(+)(in) = a plastoquinol + NAD(+) + n H(+)(out). The catalysed reaction is a plastoquinone + NADPH + (n+1) H(+)(in) = a plastoquinol + NADP(+) + n H(+)(out). Its function is as follows. NDH shuttles electrons from NAD(P)H:plastoquinone, via FMN and iron-sulfur (Fe-S) centers, to quinones in the photosynthetic chain and possibly in a chloroplast respiratory chain. The immediate electron acceptor for the enzyme in this species is believed to be plastoquinone. Couples the redox reaction to proton translocation, and thus conserves the redox energy in a proton gradient. The sequence is that of NAD(P)H-quinone oxidoreductase subunit K, chloroplastic from Lupinus luteus (European yellow lupine).